We begin with the raw amino-acid sequence, 715 residues long: ATP-dependent zinc metalloprotease YME1L1 (715 aa).

The Mitochondrial matrix portion of the chain corresponds to 1 to 237; that stretch reads MFSLSSTVQP…TNDSLRRTRL (237 aa). The segment at 34–54 is disordered; the sequence is NTPVSQKQHRDTVPEHEAPSS. Residues 41–52 are compositionally biased toward basic and acidic residues; that stretch reads QHRDTVPEHEAP. A helical membrane pass occupies residues 238 to 258; sequence ILFVLLLFGIYGLLKNPFLSV. Over 259 to 715 the chain is Mitochondrial intermembrane; the sequence is RFRTTTGLDS…VLEGKKLEVR (457 aa). ATP is bound by residues V283, T325, G326, K327, T328, and L329. H541 lines the Zn(2+) pocket. E542 is an active-site residue. Positions 545 and 619 each coordinate Zn(2+).

It in the N-terminal section; belongs to the AAA ATPase family. The protein in the C-terminal section; belongs to the peptidase M41 family. Homohexamer; may also form heterohexamers. Exists in several complexes of 600-1100 kDa. Interacts with AFG1L. It depends on Zn(2+) as a cofactor. In terms of processing, proteolytically processed by mitochondrial processing peptidase (MPP) to generate the mature form. Degraded in an OMA1-dependent manner in response to oxidative stress. In terms of tissue distribution, detected in heart and skeletal muscle (at protein level).

It is found in the mitochondrion inner membrane. It localises to the mitochondrion. It carries out the reaction ATP + H2O = ADP + phosphate + H(+). In terms of biological role, ATP-dependent metalloprotease that catalyzes the degradation of folded and unfolded proteins with a suitable degron sequence in the mitochondrial intermembrane region. Plays an important role in regulating mitochondrial morphology and function by cleaving OPA1 at position S2, giving rise to a form of OPA1 that promotes maintenance of normal mitochondrial structure and mitochondrial protein metabolism. Ensures cell proliferation, maintains normal cristae morphology and complex I respiration activity, promotes antiapoptotic activity and protects mitochondria from the accumulation of oxidatively damaged membrane proteins. Required to control the accumulation of nonassembled respiratory chain subunits (NDUFB6, OX4 and ND1). Involved in the mitochondrial adaptation in response to various signals, such as stress or developmental cues, by mediating degradation of mitochondrial proteins to rewire the mitochondrial proteome. Catalyzes degradation of mitochondrial proteins, such as translocases, lipid transfer proteins and metabolic enzymes in response to nutrient starvation in order to limit mitochondrial biogenesis: mechanistically, YME1L is activated by decreased phosphatidylethanolamine levels caused by LPIN1 activity in response to mTORC1 inhibition. Acts as a regulator of adult neural stem cell self-renewal by promoting mitochondrial proteome rewiring, preserving neural stem and progenitor cells self-renewal. Required for normal, constitutive degradation of PRELID1. Catalyzes the degradation of OMA1 in response to membrane depolarization. Mediates degradation of TIMM17A downstream of the integrated stress response (ISR). Catalyzes degradation of MICU1 when MICU1 is not assembled via an interchain disulfide. The polypeptide is ATP-dependent zinc metalloprotease YME1L1 (Yme1l1) (Mus musculus (Mouse)).